Here is a 210-residue protein sequence, read N- to C-terminus: GTP pyrophosphokinase YwaC (210 aa).

It belongs to the RelA/SpoT family. In terms of assembly, homotetramer.

The catalysed reaction is GTP + ATP = guanosine 3'-diphosphate 5'-triphosphate + AMP. It participates in purine metabolism; ppGpp biosynthesis; ppGpp from GTP: step 1/2. Its function is as follows. Functions as a (p)ppGpp synthase; GDP can be used instead of GTP, resulting in an increase of (p)ppGpp synthesis. Overexpression in relA mutants (triple relA-yjbM-ywaC deletions and single relA deletions) leads to growth arrest; GTP levels fall drastically, various guanine-related nucleotides are synthesized (ppGp or pGpp), the cellular transcriptional profile changes dramatically and 70S ribosome dimerization occurs. Overexpression in the presence of a wild-type relA gene does not have these effects. In eubacteria ppGpp (guanosine 3'-diphosphate 5'-diphosphate) is a mediator of the stringent response that coordinates a variety of cellular activities in response to changes in nutritional abundance. activities in response to changes in nutritional abundance. YwaC has probably a minor role in stringent response. In Bacillus subtilis (strain 168), this protein is GTP pyrophosphokinase YwaC (ywaC).